The sequence spans 104 residues: Phosphate metabolism protein 6 (104 aa).

A helical membrane pass occupies residues 76 to 96; that stretch reads IIVIIIVLLLYSLTMVGLFYV.

Its subcellular location is the vacuole membrane. This chain is Phosphate metabolism protein 6 (PHM6), found in Saccharomyces cerevisiae (strain ATCC 204508 / S288c) (Baker's yeast).